Reading from the N-terminus, the 176-residue chain is NAD(P)H-quinone oxidoreductase subunit 6, chloroplastic (176 aa).

The next 5 helical transmembrane spans lie at 10–30 (FLLVFLGSGLLVGGLGVVLLP), 32–52 (PIFSAFSLGFVLFCISLLYIL), 61–81 (AQLLIYVGAINVLIIFAVMFM), 92–112 (LWTVGNGITSLVCTTILFSLL), and 152–172 (FFLPFELISIILLVALIGAIS).

Belongs to the complex I subunit 6 family. As to quaternary structure, NDH is composed of at least 16 different subunits, 5 of which are encoded in the nucleus.

The protein resides in the plastid. Its subcellular location is the chloroplast thylakoid membrane. It catalyses the reaction a plastoquinone + NADH + (n+1) H(+)(in) = a plastoquinol + NAD(+) + n H(+)(out). It carries out the reaction a plastoquinone + NADPH + (n+1) H(+)(in) = a plastoquinol + NADP(+) + n H(+)(out). Its function is as follows. NDH shuttles electrons from NAD(P)H:plastoquinone, via FMN and iron-sulfur (Fe-S) centers, to quinones in the photosynthetic chain and possibly in a chloroplast respiratory chain. The immediate electron acceptor for the enzyme in this species is believed to be plastoquinone. Couples the redox reaction to proton translocation, and thus conserves the redox energy in a proton gradient. In Lepidium virginicum (Virginia pepperweed), this protein is NAD(P)H-quinone oxidoreductase subunit 6, chloroplastic (ndhG).